The primary structure comprises 425 residues: Adenylosuccinate synthetase (425 aa).

GTP-binding positions include Gly12–Lys18 and Gly40–Thr42. Catalysis depends on Asp13, which acts as the Proton acceptor. Positions 13 and 40 each coordinate Mg(2+). IMP is bound by residues Asp13 to Lys16, Asn38 to His41, Thr130, Arg144, Gln224, Thr239, and Arg301. His41 functions as the Proton donor in the catalytic mechanism. Position 297 to 303 (Thr297 to Arg303) interacts with substrate. GTP-binding positions include Arg303, Lys329–Asp331, and Ser411–Ser413.

This sequence belongs to the adenylosuccinate synthetase family. Homodimer. The cofactor is Mg(2+).

The protein resides in the cytoplasm. It catalyses the reaction IMP + L-aspartate + GTP = N(6)-(1,2-dicarboxyethyl)-AMP + GDP + phosphate + 2 H(+). It participates in purine metabolism; AMP biosynthesis via de novo pathway; AMP from IMP: step 1/2. In terms of biological role, plays an important role in the de novo pathway of purine nucleotide biosynthesis. Catalyzes the first committed step in the biosynthesis of AMP from IMP. This chain is Adenylosuccinate synthetase, found in Wolbachia sp. subsp. Drosophila simulans (strain wRi).